Here is a 143-residue protein sequence, read N- to C-terminus: Period circadian protein (143 aa).

The segment at 25-130 is disordered; that stretch reads NSKPVTAPTQ…GPSLAADNSI (106 aa). Composition is skewed to low complexity over residues 71-93 and 114-126; these read SGNCTTNSNIRMSSFTNTSITGT and GGAAADAGPSLAA.

As to quaternary structure, forms a heterodimer with timeless (TIM); the complex then translocates into the nucleus. In terms of processing, phosphorylated with a circadian rhythmicity, probably by the double-time protein (dbt). Phosphorylation could be implicated in the stability of per monomer and in the formation of heterodimer per-tim.

It localises to the nucleus. It is found in the cytoplasm. The protein localises to the perinuclear region. Functionally, essential for biological clock functions. Determines the period length of circadian and ultradian rhythms; an increase in PER dosage leads to shortened circadian rhythms and a decrease leads to lengthened circadian rhythms. Essential for the circadian rhythmicity of locomotor activity, eclosion behavior, and for the rhythmic component of the male courtship song that originates in the thoracic nervous system. The biological cycle depends on the rhythmic formation and nuclear localization of the TIM-PER complex. Light induces the degradation of TIM, which promotes elimination of PER. Nuclear activity of the heterodimer coordinatively regulates PER and TIM transcription through a negative feedback loop. Behaves as a negative element in circadian transcriptional loop. Does not appear to bind DNA, suggesting indirect transcriptional inhibition. The polypeptide is Period circadian protein (per) (Drosophila picticornis (Fruit fly)).